Consider the following 426-residue polypeptide: Enolase (426 aa).

Gln162 is a (2R)-2-phosphoglycerate binding site. Catalysis depends on Glu204, which acts as the Proton donor. Mg(2+)-binding residues include Asp241, Glu284, and Asp311. (2R)-2-phosphoglycerate-binding residues include Lys336, Arg365, Ser366, and Lys387. The Proton acceptor role is filled by Lys336.

It belongs to the enolase family. As to quaternary structure, component of the RNA degradosome, a multiprotein complex involved in RNA processing and mRNA degradation. The cofactor is Mg(2+).

It localises to the cytoplasm. Its subcellular location is the secreted. The protein resides in the cell surface. The catalysed reaction is (2R)-2-phosphoglycerate = phosphoenolpyruvate + H2O. Its pathway is carbohydrate degradation; glycolysis; pyruvate from D-glyceraldehyde 3-phosphate: step 4/5. Its function is as follows. Catalyzes the reversible conversion of 2-phosphoglycerate (2-PG) into phosphoenolpyruvate (PEP). It is essential for the degradation of carbohydrates via glycolysis. This chain is Enolase, found in Hydrogenovibrio crunogenus (strain DSM 25203 / XCL-2) (Thiomicrospira crunogena).